Consider the following 751-residue polypeptide: Catalase-peroxidase (751 aa).

Residues 1-21 are disordered; the sequence is MSNESKCPFHQTAGGGTTNRD. A cross-link (tryptophyl-tyrosyl-methioninium (Trp-Tyr) (with M-270)) is located at residues 90 to 244; sequence WHSAGTYRIG…LAAVQMGLIY (155 aa). The active-site Proton acceptor is histidine 91. The interval 195–227 is disordered; the sequence is YGKDQVKAQPPGQGDLVAEPAKHGEEQNRDLSA. Basic and acidic residues predominate over residues 214-227; sequence PAKHGEEQNRDLSA. The segment at residues 244–270 is a cross-link (tryptophyl-tyrosyl-methioninium (Tyr-Met) (with W-90)); sequence YVNPEGPEGNPDPVASGKDIRETFGRM. Histidine 285 serves as a coordination point for heme b. Residues 365-387 form a disordered region; the sequence is AHQWRPKEGKGAGTVPDAHDPGK.

The protein belongs to the peroxidase family. Peroxidase/catalase subfamily. As to quaternary structure, homodimer or homotetramer. It depends on heme b as a cofactor. Formation of the three residue Trp-Tyr-Met cross-link is important for the catalase, but not the peroxidase activity of the enzyme.

The catalysed reaction is H2O2 + AH2 = A + 2 H2O. The enzyme catalyses 2 H2O2 = O2 + 2 H2O. Its function is as follows. Bifunctional enzyme with both catalase and broad-spectrum peroxidase activity. This chain is Catalase-peroxidase, found in Pseudomonas putida (strain ATCC 700007 / DSM 6899 / JCM 31910 / BCRC 17059 / LMG 24140 / F1).